The chain runs to 415 residues: Serine hydroxymethyltransferase (415 aa).

Residues leucine 117 and 121-123 (GHL) contribute to the (6S)-5,6,7,8-tetrahydrofolate site. Residue lysine 226 is modified to N6-(pyridoxal phosphate)lysine.

Belongs to the SHMT family. In terms of assembly, homodimer. Pyridoxal 5'-phosphate serves as cofactor.

It localises to the cytoplasm. The catalysed reaction is (6R)-5,10-methylene-5,6,7,8-tetrahydrofolate + glycine + H2O = (6S)-5,6,7,8-tetrahydrofolate + L-serine. It participates in one-carbon metabolism; tetrahydrofolate interconversion. It functions in the pathway amino-acid biosynthesis; glycine biosynthesis; glycine from L-serine: step 1/1. In terms of biological role, catalyzes the reversible interconversion of serine and glycine with tetrahydrofolate (THF) serving as the one-carbon carrier. This reaction serves as the major source of one-carbon groups required for the biosynthesis of purines, thymidylate, methionine, and other important biomolecules. Also exhibits THF-independent aldolase activity toward beta-hydroxyamino acids, producing glycine and aldehydes, via a retro-aldol mechanism. The polypeptide is Serine hydroxymethyltransferase (Dehalococcoides mccartyi (strain ATCC BAA-2266 / KCTC 15142 / 195) (Dehalococcoides ethenogenes (strain 195))).